We begin with the raw amino-acid sequence, 729 residues long: Hydroxamate siderophore receptor FhuE (729 aa).

An N-terminal signal peptide occupies residues 1–36; sequence MLSTQFNRDNQYQAITKPSLLAGCIALALLPSAAFA. A TonB box motif is present at residues 42–49; sequence ETVIVEGS. The interval 48–72 is disordered; sequence GSATAPDDGENDYSVTSTSAGTKMQ. Positions 60 to 72 are enriched in polar residues; sequence YSVTSTSAGTKMQ. The region spanning 74–183 is the TBDR plug domain; that stretch reads TQRDIPQSVT…PSAAINMVRK (110 aa). Residues Arg-117, Arg-142, Trp-275, Tyr-357, Asn-373, and Trp-416 each coordinate Fe(III)-coprogen. The region spanning 189–729 is the TBDR beta-barrel domain; that stretch reads EFKGDVSAEY…NFSITGTYQF (541 aa). Residues 712–729 carry the TonB C-terminal box motif; it reads SIVYGTPRNFSITGTYQF.

It belongs to the TonB-dependent receptor family.

It localises to the cell outer membrane. Functionally, involved in the active transport across the outer membrane of iron complexed with linear hydroxamate siderophores coprogen, rhodotorulic acid and ferrioxamine B. Binds Fe-coprogen with high affinity, rhodotorulic acid to a lesser extent, and weakly to ferrioxamine B. Selective for planar siderophores. Does not use cyclic siderophores ferrichrome nor ferrioxamine E as substrates. The sequence is that of Hydroxamate siderophore receptor FhuE from Escherichia coli (strain K12).